The chain runs to 194 residues: Nucleoside triphosphate pyrophosphatase (194 aa).

Residue aspartate 68 is the Proton acceptor of the active site.

The protein belongs to the Maf family. Requires a divalent metal cation as cofactor.

The protein localises to the cytoplasm. It catalyses the reaction a ribonucleoside 5'-triphosphate + H2O = a ribonucleoside 5'-phosphate + diphosphate + H(+). It carries out the reaction a 2'-deoxyribonucleoside 5'-triphosphate + H2O = a 2'-deoxyribonucleoside 5'-phosphate + diphosphate + H(+). In terms of biological role, nucleoside triphosphate pyrophosphatase. May have a dual role in cell division arrest and in preventing the incorporation of modified nucleotides into cellular nucleic acids. The polypeptide is Nucleoside triphosphate pyrophosphatase (Corynebacterium jeikeium (strain K411)).